Here is a 133-residue protein sequence, read N- to C-terminus: UPF0102 protein bll0669 (133 aa).

Belongs to the UPF0102 family.

This chain is UPF0102 protein bll0669, found in Bradyrhizobium diazoefficiens (strain JCM 10833 / BCRC 13528 / IAM 13628 / NBRC 14792 / USDA 110).